The primary structure comprises 638 residues: Chaperone protein DnaK (638 aa).

Thr-198 carries the post-translational modification Phosphothreonine; by autocatalysis. The interval 602-638 (QAKSQAQGGEEAQAKDAGQSNDDVVDAEFEEVKDDKK) is disordered. Residues 624 to 638 (DVVDAEFEEVKDDKK) show a composition bias toward acidic residues.

Belongs to the heat shock protein 70 family.

Acts as a chaperone. In Shewanella denitrificans (strain OS217 / ATCC BAA-1090 / DSM 15013), this protein is Chaperone protein DnaK.